Here is a 447-residue protein sequence, read N- to C-terminus: Tubulin beta-2 chain (447 aa).

GTP contacts are provided by Gln11, Glu69, Ser138, Gly142, Thr143, Gly144, Asn204, and Asn226. Glu69 is a Mg(2+) binding site. The tract at residues 419–447 (VSEYQQYQDATADDEGEYEDEEEEADLQD) is disordered. A compositionally biased stretch (acidic residues) spans 429-447 (TADDEGEYEDEEEEADLQD).

This sequence belongs to the tubulin family. In terms of assembly, dimer of alpha and beta chains. A typical microtubule is a hollow water-filled tube with an outer diameter of 25 nm and an inner diameter of 15 nM. Alpha-beta heterodimers associate head-to-tail to form protofilaments running lengthwise along the microtubule wall with the beta-tubulin subunit facing the microtubule plus end conferring a structural polarity. Microtubules usually have 13 protofilaments but different protofilament numbers can be found in some organisms and specialized cells. Mg(2+) serves as cofactor. As to expression, expressed in leaf sheaths and suspension cultured cells.

The protein resides in the cytoplasm. Its subcellular location is the cytoskeleton. Its function is as follows. Tubulin is the major constituent of microtubules, a cylinder consisting of laterally associated linear protofilaments composed of alpha- and beta-tubulin heterodimers. Microtubules grow by the addition of GTP-tubulin dimers to the microtubule end, where a stabilizing cap forms. Below the cap, tubulin dimers are in GDP-bound state, owing to GTPase activity of alpha-tubulin. The protein is Tubulin beta-2 chain (TUBB2) of Oryza sativa subsp. japonica (Rice).